The primary structure comprises 1248 residues: Reverse gyrase 1 (1248 aa).

Residues 7-44 (IPPSIYLFSCPNCGRSISTYRLLLGSVCNICLEEDKEY) form an RG N-terminal-type zinc finger. Positions 16, 19, 34, and 37 each coordinate Zn(2+). ATP contacts are provided by residues glutamine 92 and 109 to 116 (APPGLGKT). Residues 96–262 (IYRLLSGESF…KKYRENTQKN (167 aa)) enclose the Helicase ATP-binding domain. Positions 219-222 (DDVD) match the DEAD box motif. The topoisomerase I stretch occupies residues 621–1248 (QKVKTVLLVV…QVYEEINEIR (628 aa)). In terms of domain architecture, Toprim spans 625-789 (TVLLVVESPN…NIRRAEFHEV (165 aa)). Residue glutamate 631 coordinates Mg(2+). Residues 706–735 (IKKCENNHQFTDFFESNKCPRCMTTKVRYD) form an RG C-terminal-type; atypical zinc finger. Residues cysteine 709, histidine 713, cysteine 724, and cysteine 727 each contribute to the Zn(2+) site. Aspartate 758 contributes to the Mg(2+) binding site. Residues 805–1248 (NVNLVKSQLV…QVYEEINEIR (444 aa)) enclose the Topo IA-type catalytic domain. Tyrosine 965 (O-(5'-phospho-DNA)-tyrosine intermediate) is an active-site residue.

The protein in the N-terminal section; belongs to the DEAD box helicase family. DDVD subfamily. In the C-terminal section; belongs to the type IA topoisomerase family. As to quaternary structure, monomer. Zn(2+) is required as a cofactor. Mg(2+) serves as cofactor. The N-terminus is blocked.

It localises to the cytoplasm. It carries out the reaction ATP + H2O = ADP + phosphate + H(+). Its function is as follows. Modifies the topological state of DNA by introducing positive supercoils in an ATP-dependent process. Increases the linking number in steps of +1. Has a DNA-stimulated ATPase activity; closed circular ssDNA stimulates ATPase much better than dsDNA although negative supercoiled, positive supercoiled and relaxed dsDNA all stimulate ATPase activity. All NTPs permit topoisomerization (relaxation) of negatively supercoiled dsDNA without nucleotide hydrolysis. It transiently cleaves a single DNA strand and remains covalently bound to the 5' DNA end. Acts via a tyrosine residue. Reverse gyrase binds and unwinds DNA independently of ATP binding and DNA cleavage. May be involved in rewinding the DNA strands in the regions of the chromosome that have opened up to allow transcription or replication, probably acts via ssDNA regions of the chromosome. This chain is Reverse gyrase 1, found in Sulfolobus acidocaldarius (strain ATCC 33909 / DSM 639 / JCM 8929 / NBRC 15157 / NCIMB 11770).